Here is a 2472-residue protein sequence, read N- to C-terminus: Highly reducing polyketide synthase xilA (2472 aa).

The region spanning M1–D417 is the Ketosynthase family 3 (KS3) domain. Catalysis depends on for beta-ketoacyl synthase activity residues C162, H298, and H340. A disordered region spans residues N442–D502. The segment covering T450–N489 has biased composition (low complexity). A Malonyl-CoA:ACP transacylase (MAT) domain is found at F597–V932. The segment at H991–F1129 is N-terminal hotdog fold. Positions H991 to S1294 constitute a PKS/mFAS DH domain. The Proton acceptor; for dehydratase activity role is filled by H1023. The tract at residues G1141 to S1294 is C-terminal hotdog fold. Catalysis depends on D1207, which acts as the Proton donor; for dehydratase activity. Residues N1289–I1505 are methyltransferase (CMeT) domain. The region spanning G1724–I2036 is the Enoyl reductase (ER) domain. One can recognise a Ketoreductase (KR) domain in the interval A2060 to K2239. Residues E2391–A2469 form the Carrier domain. The residue at position 2428 (S2428) is an O-(pantetheine 4'-phosphoryl)serine.

It depends on pantetheine 4'-phosphate as a cofactor.

Its pathway is secondary metabolite biosynthesis. Functionally, highly reducing polyketide synthase; part of the gene cluster that mediates the biosynthesis of the 6-methyl-2-pyrone derivative xylariolide D. XilA produces the 5-alkyl-6-methyl-2-pyrone backbone called prexylariolide D via sequential condensations of 4 malonyl-CoA units with one acetyl-CoA starter unit. During the biosynthesis, the linear polyketide chain is branched by the addition of an acetyl unit as the origin of the methyl group at the 2-pyrone ring. Prexylariolide D is then hydroxylated at the side chain by xilC to form the final product, xylariolide D. This chain is Highly reducing polyketide synthase xilA, found in Penicillium crustosum (Blue mold fungus).